Reading from the N-terminus, the 171-residue chain is NADH-quinone oxidoreductase subunit I 1 (171 aa).

4Fe-4S ferredoxin-type domains follow at residues 41 to 71 (LSRD…LQAT) and 81 to 110 (EFFR…LTPD). The [4Fe-4S] cluster site is built by cysteine 51, cysteine 54, cysteine 57, cysteine 61, cysteine 90, cysteine 93, cysteine 96, and cysteine 100.

It belongs to the complex I 23 kDa subunit family. NDH-1 is composed of 14 different subunits. Subunits NuoA, H, J, K, L, M, N constitute the membrane sector of the complex. [4Fe-4S] cluster is required as a cofactor.

It localises to the cell inner membrane. The catalysed reaction is a quinone + NADH + 5 H(+)(in) = a quinol + NAD(+) + 4 H(+)(out). In terms of biological role, NDH-1 shuttles electrons from NADH, via FMN and iron-sulfur (Fe-S) centers, to quinones in the respiratory chain. The immediate electron acceptor for the enzyme in this species is believed to be ubiquinone. Couples the redox reaction to proton translocation (for every two electrons transferred, four hydrogen ions are translocated across the cytoplasmic membrane), and thus conserves the redox energy in a proton gradient. The protein is NADH-quinone oxidoreductase subunit I 1 of Nitrosospira multiformis (strain ATCC 25196 / NCIMB 11849 / C 71).